The primary structure comprises 275 residues: 3-methyl-2-oxobutanoate hydroxymethyltransferase (275 aa).

Positions 44 and 83 each coordinate Mg(2+). 3-methyl-2-oxobutanoate is bound by residues 44–45 (DS), Asp-83, and Lys-113. Glu-115 contacts Mg(2+). The active-site Proton acceptor is Glu-182.

The protein belongs to the PanB family. As to quaternary structure, homodecamer; pentamer of dimers. It depends on Mg(2+) as a cofactor.

The protein resides in the cytoplasm. The catalysed reaction is 3-methyl-2-oxobutanoate + (6R)-5,10-methylene-5,6,7,8-tetrahydrofolate + H2O = 2-dehydropantoate + (6S)-5,6,7,8-tetrahydrofolate. It participates in cofactor biosynthesis; (R)-pantothenate biosynthesis; (R)-pantoate from 3-methyl-2-oxobutanoate: step 1/2. Catalyzes the reversible reaction in which hydroxymethyl group from 5,10-methylenetetrahydrofolate is transferred onto alpha-ketoisovalerate to form ketopantoate. In Clostridium botulinum (strain 657 / Type Ba4), this protein is 3-methyl-2-oxobutanoate hydroxymethyltransferase.